The sequence spans 184 residues: Interferon alpha-1 (184 aa).

Positions 1-23 (MALPVSLLMALVVLSCHSICSLG) are cleaved as a signal peptide. Cystine bridges form between Cys-24-Cys-122 and Cys-52-Cys-162.

This sequence belongs to the alpha/beta interferon family. As to quaternary structure, interacts with CR2.

It localises to the secreted. Its function is as follows. Produced by macrophages, IFN-alpha have antiviral activities. Interferon stimulates the production of two enzymes: a protein kinase and an oligoadenylate synthetase. The sequence is that of Interferon alpha-1 from Equus caballus (Horse).